A 388-amino-acid polypeptide reads, in one-letter code: Succinate--CoA ligase [ADP-forming] subunit beta (388 aa).

An ATP-grasp domain is found at 9–244 (KQLFAEYGLP…PSQDDPREAH (236 aa)). ATP-binding positions include Lys-46, 53 to 55 (GRG), Glu-99, Thr-102, and Glu-107. Mg(2+)-binding residues include Asn-199 and Asp-213. Residues Asn-264 and 321 to 323 (GIV) each bind substrate.

It belongs to the succinate/malate CoA ligase beta subunit family. As to quaternary structure, heterotetramer of two alpha and two beta subunits. Mg(2+) is required as a cofactor.

The catalysed reaction is succinate + ATP + CoA = succinyl-CoA + ADP + phosphate. It catalyses the reaction GTP + succinate + CoA = succinyl-CoA + GDP + phosphate. Its pathway is carbohydrate metabolism; tricarboxylic acid cycle; succinate from succinyl-CoA (ligase route): step 1/1. Its function is as follows. Succinyl-CoA synthetase functions in the citric acid cycle (TCA), coupling the hydrolysis of succinyl-CoA to the synthesis of either ATP or GTP and thus represents the only step of substrate-level phosphorylation in the TCA. The beta subunit provides nucleotide specificity of the enzyme and binds the substrate succinate, while the binding sites for coenzyme A and phosphate are found in the alpha subunit. This Pseudomonas fluorescens (strain ATCC BAA-477 / NRRL B-23932 / Pf-5) protein is Succinate--CoA ligase [ADP-forming] subunit beta.